The sequence spans 330 residues: MNVYYEQDADLGYLQGKNIAVLGYGSQGHAHALNLKESGLNVRVGLRTDSASCQKARAAGLQVDTIADAVKWADVVMVLLPDQYQKAIYDSEIAPNMEPGNTLAFAHGFNIHYKQIVPPDTINVIMIAPKSPGHLVRRTFTEGNGVPCLIAIHHDATGEAKQQALAWAKGLGGAKAGVIETTIKNETETDLFGEQAVLCGGSAELIKAGFETLVEAGYPEELAYFECMHELKLIVDLFYEGGLSRMNYSVSDTAEYGGMTRGPRLITPAVKAEMKKILEEVQDGRFAKEFIDECNGGYKNLNRLRKENSSHPIETVGAKLRNMMSWLIKK.

Residues 1–181 form the KARI N-terminal Rossmann domain; it reads MNVYYEQDAD…GGAKAGVIET (181 aa). Residues 24-27, Arg-47, Ser-50, Ser-52, and 82-85 contribute to the NADP(+) site; these read YGSQ and DQYQ. The active site involves His-107. An NADP(+)-binding site is contributed by Gly-133. Residues 182–327 form the KARI C-terminal knotted domain; that stretch reads TIKNETETDL…AKLRNMMSWL (146 aa). The Mg(2+) site is built by Asp-190, Glu-194, Glu-226, and Glu-230. Substrate is bound at residue Ser-251.

Belongs to the ketol-acid reductoisomerase family. Mg(2+) is required as a cofactor.

It carries out the reaction (2R)-2,3-dihydroxy-3-methylbutanoate + NADP(+) = (2S)-2-acetolactate + NADPH + H(+). The enzyme catalyses (2R,3R)-2,3-dihydroxy-3-methylpentanoate + NADP(+) = (S)-2-ethyl-2-hydroxy-3-oxobutanoate + NADPH + H(+). Its pathway is amino-acid biosynthesis; L-isoleucine biosynthesis; L-isoleucine from 2-oxobutanoate: step 2/4. It participates in amino-acid biosynthesis; L-valine biosynthesis; L-valine from pyruvate: step 2/4. Its function is as follows. Involved in the biosynthesis of branched-chain amino acids (BCAA). Catalyzes an alkyl-migration followed by a ketol-acid reduction of (S)-2-acetolactate (S2AL) to yield (R)-2,3-dihydroxy-isovalerate. In the isomerase reaction, S2AL is rearranged via a Mg-dependent methyl migration to produce 3-hydroxy-3-methyl-2-ketobutyrate (HMKB). In the reductase reaction, this 2-ketoacid undergoes a metal-dependent reduction by NADPH to yield (R)-2,3-dihydroxy-isovalerate. The polypeptide is Ketol-acid reductoisomerase (NADP(+)) (Chlorobium phaeovibrioides (strain DSM 265 / 1930) (Prosthecochloris vibrioformis (strain DSM 265))).